The primary structure comprises 186 residues: Probable chorismate pyruvate-lyase (186 aa).

Arg78, Leu116, and Glu175 together coordinate substrate.

Belongs to the UbiC family.

The protein resides in the cytoplasm. The enzyme catalyses chorismate = 4-hydroxybenzoate + pyruvate. Its pathway is cofactor biosynthesis; ubiquinone biosynthesis. Functionally, removes the pyruvyl group from chorismate, with concomitant aromatization of the ring, to provide 4-hydroxybenzoate (4HB) for the ubiquinone pathway. This chain is Probable chorismate pyruvate-lyase, found in Psychromonas ingrahamii (strain DSM 17664 / CCUG 51855 / 37).